A 184-amino-acid chain; its full sequence is Mitochondrial import inner membrane translocase subunit TIM22 (184 aa).

The tract at residues 1-26 is disordered; the sequence is MSLWGVYTGPQPPKKPLQEMTQEEQA. Disulfide bonds link C40-C118 and C137-C156. Transmembrane regions (helical) follow at residues 45–65 and 151–171; these read VMAG…MASM and AALV…MYLN.

The protein belongs to the Tim17/Tim22/Tim23 family. As to quaternary structure, component of the TIM22 complex, whose core is composed of TIM22 and TIM54, associated with the 70 kDa heterohexamer composed of TIM9 and TIM10 (or TIM8 and TIM13).

Its subcellular location is the mitochondrion inner membrane. Its function is as follows. Essential core component of the TIM22 complex, a complex that mediates the import and insertion of multi-pass transmembrane proteins into the mitochondrial inner membrane. In the TIM22 complex, it constitutes the voltage-activated and signal-gated channel. Forms a twin-pore translocase that uses the membrane potential as external driving force in 2 voltage-dependent steps. The chain is Mitochondrial import inner membrane translocase subunit TIM22 from Candida albicans (strain SC5314 / ATCC MYA-2876) (Yeast).